A 505-amino-acid chain; its full sequence is uncharacterized protein (505 aa).

Residues 461 to 480 (RTDVHPGNSDDEGAYSSADS) form a disordered region.

This sequence to M.jannaschii MJ0787.

This is an uncharacterized protein from Methanothermobacter thermautotrophicus (strain ATCC 29096 / DSM 1053 / JCM 10044 / NBRC 100330 / Delta H) (Methanobacterium thermoautotrophicum).